The sequence spans 2203 residues: Genome polyprotein (2203 aa).

Gly2 carries N-myristoyl glycine; by host lipidation. The Cytoplasmic portion of the chain corresponds to Gly2–Gln1513. The interval Glu567–Val583 is amphipathic alpha-helix. Active-site for protease 2A activity residues include His890 and Asp908. Zn(2+)-binding residues include Cys925 and Cys927. Cys979 serves as the catalytic For protease 2A activity. Zn(2+) is bound by residues Cys985 and His987. The segment at Ser1119–Gln1191 is membrane-binding. The segment at Ser1119 to Thr1257 is oligomerization. Positions Ala1140 to Gln1144 are RNA-binding. One can recognise an SF3 helicase domain in the interval Glu1223–Asn1379. Zn(2+) is bound by residues Cys1387, Cys1399, and Cys1404. The segment at Cys1387–Cys1404 adopts a C4-type; degenerate zinc-finger fold. The interval Glu1431–Val1438 is RNA-binding. Residues Leu1442–Gln1447 are oligomerization. An intramembrane segment occupies Ala1514–Tyr1529. Over Lys1530–Phe2203 the chain is Cytoplasmic. The residue at position 1539 (Tyr1539) is an O-(5'-phospho-RNA)-tyrosine. The region spanning Gly1559–Phe1737 is the Peptidase C3 domain. Catalysis depends on for protease 3C activity residues His1598, Glu1629, and Cys1705. The RdRp catalytic domain occupies Gly1968–Leu2084. Mg(2+) is bound by residues Asp1974 and Asp2070.

The protein belongs to the picornaviruses polyprotein family. As to quaternary structure, interacts with capsid protein VP1 and capsid protein VP3 to form heterotrimeric protomers. In terms of assembly, interacts with capsid protein VP0, and capsid protein VP3 to form heterotrimeric protomers. Five protomers subsequently associate to form pentamers which serve as building blocks for the capsid. Interacts with capsid protein VP2, capsid protein VP3 and capsid protein VP4 following cleavage of capsid protein VP0. Interacts with capsid protein VP1 and capsid protein VP3 in the mature capsid. As to quaternary structure, interacts with capsid protein VP0 and capsid protein VP1 to form heterotrimeric protomers. Five protomers subsequently associate to form pentamers which serve as building blocks for the capsid. Interacts with capsid protein VP4 in the mature capsid. Interacts with protein 2C; this interaction may be important for virion morphogenesis. In terms of assembly, interacts with capsid protein VP1 and capsid protein VP3. Homodimer. As to quaternary structure, homohexamer; forms a hexameric ring structure with 6-fold symmetry characteristic of AAA+ ATPases. Interacts (via N-terminus) with host RTN3 (via reticulon domain); this interaction is important for viral replication. Interacts with capsid protein VP3; this interaction may be important for virion morphogenesis. In terms of assembly, interacts with protein 3CD. Homodimer. Interacts with host GBF1. Interacts (via GOLD domain) with host ACBD3 (via GOLD domain); this interaction allows the formation of a viral protein 3A/ACBD3 heterotetramer with a 2:2 stoichiometry, which will stimulate the recruitment of host PI4KB in order to synthesize PI4P at the viral RNA replication sites. As to quaternary structure, interacts with RNA-directed RNA polymerase. In terms of assembly, interacts with protein 3AB and with RNA-directed RNA polymerase. Interacts with Viral protein genome-linked and with protein 3CD. The cofactor is Mg(2+). Specific enzymatic cleavages in vivo by the viral proteases yield processing intermediates and the mature proteins. In terms of processing, myristoylation is required for the formation of pentamers during virus assembly. Further assembly of 12 pentamers and a molecule of genomic RNA generates the provirion. Post-translationally, during virion maturation, immature virions are rendered infectious following cleavage of VP0 into VP4 and VP2. This maturation seems to be an autocatalytic event triggered by the presence of RNA in the capsid and it is followed by a conformational change infectious virion. Myristoylation is required during RNA encapsidation and formation of the mature virus particle. In terms of processing, VPg is uridylylated by the polymerase into VPg-pUpU. This acts as a nucleotide-peptide primer for the genomic RNA replication.

The protein localises to the virion. The protein resides in the host cytoplasm. Its subcellular location is the host cytoplasmic vesicle membrane. It is found in the host nucleus. It catalyses the reaction a ribonucleoside 5'-triphosphate + H2O = a ribonucleoside 5'-diphosphate + phosphate + H(+). It carries out the reaction Selective cleavage of Tyr-|-Gly bond in the picornavirus polyprotein.. The catalysed reaction is RNA(n) + a ribonucleoside 5'-triphosphate = RNA(n+1) + diphosphate. The enzyme catalyses Selective cleavage of Gln-|-Gly bond in the poliovirus polyprotein. In other picornavirus reactions Glu may be substituted for Gln, and Ser or Thr for Gly.. With respect to regulation, replication or transcription is subject to high level of random mutations by the nucleotide analog ribavirin. Its function is as follows. Forms an icosahedral capsid of pseudo T=3 symmetry with capsid proteins VP2 and VP3. The capsid is 300 Angstroms in diameter, composed of 60 copies of each capsid protein and enclosing the viral positive strand RNA genome. Capsid protein VP1 mainly forms the vertices of the capsid. Capsid protein VP1 interacts with host cell receptor to provide virion attachment to target host cells. This attachment induces virion internalization. Tyrosine kinases are probably involved in the entry process. After binding to its receptor, the capsid undergoes conformational changes. Capsid protein VP1 N-terminus (that contains an amphipathic alpha-helix) and capsid protein VP4 are externalized. Together, they shape a pore in the host membrane through which viral genome is translocated to host cell cytoplasm. Functionally, forms an icosahedral capsid of pseudo T=3 symmetry with capsid proteins VP2 and VP3. The capsid is 300 Angstroms in diameter, composed of 60 copies of each capsid protein and enclosing the viral positive strand RNA genome. Lies on the inner surface of the capsid shell. After binding to the host receptor, the capsid undergoes conformational changes. Capsid protein VP4 is released, Capsid protein VP1 N-terminus is externalized, and together, they shape a pore in the host membrane through which the viral genome is translocated into the host cell cytoplasm. In terms of biological role, component of immature procapsids, which is cleaved into capsid proteins VP4 and VP2 after maturation. Allows the capsid to remain inactive before the maturation step. Its function is as follows. Cysteine protease that cleaves viral polyprotein and specific host proteins. It is responsible for the autocatalytic cleavage between the P1 and P2 regions, which is the first cleavage occurring in the polyprotein. Also cleaves the host translation initiation factor EIF4G1, in order to shut down the capped cellular mRNA translation. Inhibits the host nucleus-cytoplasm protein and RNA trafficking by cleaving host members of the nuclear pores. Counteracts stress granule formation probably by antagonizing its assembly or promoting its dissassembly. Functionally, plays an essential role in the virus replication cycle by acting as a viroporin. Creates a pore in the host endoplasmic reticulum and as a consequence releases Ca2+ in the cytoplasm of infected cell. In turn, high levels of cytoplasmic calcium may trigger membrane trafficking and transport of viral ER-associated proteins to viroplasms, sites of viral genome replication. Induces and associates with structural rearrangements of intracellular membranes. Displays RNA-binding, nucleotide binding and NTPase activities. May play a role in virion morphogenesis and viral RNA encapsidation by interacting with the capsid protein VP3. In terms of biological role, localizes the viral replication complex to the surface of membranous vesicles. Together with protein 3CD binds the Cis-Active RNA Element (CRE) which is involved in RNA synthesis initiation. Acts as a cofactor to stimulate the activity of 3D polymerase, maybe through a nucleid acid chaperone activity. Its function is as follows. Localizes the viral replication complex to the surface of membranous vesicles. It inhibits host cell endoplasmic reticulum-to-Golgi apparatus transport and causes the disassembly of the Golgi complex, possibly through GBF1 interaction. This would result in depletion of MHC, trail receptors and IFN receptors at the host cell surface. Plays an essential role in viral RNA replication by recruiting ACBD3 and PI4KB at the viral replication sites, thereby allowing the formation of the rearranged membranous structures where viral replication takes place. Functionally, acts as a primer for viral RNA replication and remains covalently bound to viral genomic RNA. VPg is uridylylated prior to priming replication into VPg-pUpU. The oriI viral genomic sequence may act as a template for this. The VPg-pUpU is then used as primer on the genomic RNA poly(A) by the RNA-dependent RNA polymerase to replicate the viral genome. During genome replication, the VPg-RNA linkage is removed by the host TDP2, thereby accelerating replication. During the late stage of the replication cycle, host TDP2 is excluded from sites of viral RNA synthesis and encapsidation, allowing for the generation of progeny virions. Involved in the viral replication complex and viral polypeptide maturation. It exhibits protease activity with a specificity and catalytic efficiency that is different from protease 3C. Protein 3CD lacks polymerase activity. Protein 3CD binds to the 5'UTR of the viral genome. In terms of biological role, replicates the viral genomic RNA on the surface of intracellular membranes. May form linear arrays of subunits that propagate along a strong head-to-tail interaction called interface-I. Covalently attaches UMP to a tyrosine of VPg, which is used to prime RNA synthesis. The positive stranded RNA genome is first replicated at virus induced membranous vesicles, creating a dsRNA genomic replication form. This dsRNA is then used as template to synthesize positive stranded RNA genomes. ss(+)RNA genomes are either translated, replicated or encapsidated. Its function is as follows. Major viral protease that mediates proteolytic processing of the polyprotein. Cleaves host EIF5B, contributing to host translation shutoff. Also cleaves host PABPC1, contributing to host translation shutoff. Cleaves host NLRP1, triggers host N-glycine-mediated degradation of the autoinhibitory NLRP1 N-terminal fragment. In Echovirus 9 (strain Barty), this protein is Genome polyprotein.